The primary structure comprises 432 residues: Adenylosuccinate synthetase (432 aa).

Residues 13 to 19 and 41 to 43 each bind GTP; these read GDEGKGK and GHT. Asp14 functions as the Proton acceptor in the catalytic mechanism. The Mg(2+) site is built by Asp14 and Gly41. IMP-binding positions include 14-17, 39-42, Thr130, Arg144, Gln225, Thr240, and Arg304; these read DEGK and NAGH. The active-site Proton donor is the His42. 300–306 is a binding site for substrate; it reads AVTGRPR. Residues Arg306, 332 to 334, and 415 to 417 each bind GTP; these read KLD and STG.

It belongs to the adenylosuccinate synthetase family. As to quaternary structure, homodimer. Mg(2+) serves as cofactor.

Its subcellular location is the cytoplasm. It catalyses the reaction IMP + L-aspartate + GTP = N(6)-(1,2-dicarboxyethyl)-AMP + GDP + phosphate + 2 H(+). It participates in purine metabolism; AMP biosynthesis via de novo pathway; AMP from IMP: step 1/2. Functionally, plays an important role in the de novo pathway of purine nucleotide biosynthesis. Catalyzes the first committed step in the biosynthesis of AMP from IMP. This is Adenylosuccinate synthetase from Histophilus somni (strain 2336) (Haemophilus somnus).